The chain runs to 489 residues: Ribulose-1,5 bisphosphate carboxylase/oxygenase large subunit N-methyltransferase, chloroplastic (489 aa).

The N-terminal 37 residues, 1–37, are a transit peptide targeting the chloroplast; it reads MATIFSGGSVSPFLFHTNKGTSFTPKAPILHLKRSFS. An SET domain is found at 64–288; it reads EGVITAKTPV…AGEQVYIQYD (225 aa). Residues 80–82 and Arg-222 contribute to the S-adenosyl-L-methionine site; that span reads EGL. Substrate is bound by residues Arg-222, Arg-226, and Asp-239. 242–243 provides a ligand contact to S-adenosyl-L-methionine; the sequence is NH. Substrate is bound by residues Tyr-254, Tyr-287, and Tyr-300.

This sequence belongs to the class V-like SAM-binding methyltransferase superfamily. Plant protein-lysine LSMT methyltransferase family. In terms of assembly, homotrimer. In terms of tissue distribution, highly expressed in leaf.

The protein localises to the plastid. It localises to the chloroplast. The enzyme catalyses L-lysyl-[ribulose-1,5-bisphosphate carboxylase] + 3 S-adenosyl-L-methionine = N(6),N(6),N(6)-trimethyl-L-lysyl-[ribulose-1,5-bisphosphate carboxylase] + 3 S-adenosyl-L-homocysteine + 3 H(+). It carries out the reaction [fructose-bisphosphate aldolase]-L-lysine + 3 S-adenosyl-L-methionine = [fructose-bisphosphate aldolase]-N(6),N(6),N(6)-trimethyl-L-lysine + 3 S-adenosyl-L-homocysteine + 3 H(+). In terms of biological role, methylates 'Lys-14' of the large subunit of RuBisCO. Can also use with lower efficiency chloroplastic fructose-bisphosphate aldolases and gamma-tocopherol methyltransferase as substrates, but not a cytosolic aldolase. This chain is Ribulose-1,5 bisphosphate carboxylase/oxygenase large subunit N-methyltransferase, chloroplastic (RBCMT), found in Pisum sativum (Garden pea).